A 118-amino-acid chain; its full sequence is MARAAATQLVLVAMVAAMLLVATDAAISCGQVSSALSPCISYARGNGAKPPVACCSGVKRLAGAAQSTADKQAACRCLKSLATSIKGINMGKVSGVPGKCGVSVPFPISMSTDCNKVH.

An N-terminal signal peptide occupies residues 1-25; sequence MARAAATQLVLVAMVAAMLLVATDA. Intrachain disulfides connect cysteine 29–cysteine 77, cysteine 39–cysteine 54, cysteine 55–cysteine 100, and cysteine 75–cysteine 114.

The protein belongs to the plant LTP family.

Functionally, plant non-specific lipid-transfer proteins transfer phospholipids as well as galactolipids across membranes. May play a role in wax or cutin deposition in the cell walls of expanding epidermal cells and certain secretory tissues. This is Non-specific lipid-transfer protein 3 (LTP3) from Hordeum vulgare (Barley).